The sequence spans 1727 residues: DNA-directed RNA polymerase II subunit rpb1 (1727 aa).

Cys66, Cys69, Cys76, His79, Cys106, Cys109, Cys147, and Cys175 together coordinate Zn(2+). Positions 486, 488, and 490 each coordinate Mg(2+). Positions 819 to 831 (PQEFFFHAMGGRE) are bridging helix. Residue Lys1266 forms a Glycyl lysine isopeptide (Lys-Gly) (interchain with G-Cter in ubiquitin) linkage. Disordered regions lie at residues 1478 to 1512 (EPSN…YDAP) and 1551 to 1727 (PTYS…NKKK). Polar residues predominate over residues 1480–1505 (SNVSYPDTPGSQTPSYSYGDGSTTPF). Tandem repeats lie at residues 1553–1559 (YSPTSPS), 1560–1566 (YSPTSPS), 1567–1573 (YSPTSPS), 1574–1580 (YSPTSPS), 1581–1587 (YSPTSPS), 1588–1594 (YSPTSPS), 1595–1601 (YSPTSPF), 1602–1608 (YSPTSPS), 1609–1615 (YSPTSPS), 1616–1622 (YSPTSPS), 1623–1629 (YSPTSPS), 1630–1636 (YSPTSPS), 1637–1643 (YSPTSPS), 1644–1650 (YSPTSPS), 1651–1657 (YSPTSPS), 1658–1664 (YSPTSPS), 1665–1671 (YSPTSPS), 1672–1678 (YSPTSPS), 1679–1685 (YSPTSPS), 1686–1692 (YSPSSPS), 1693–1699 (YSPSSPS), 1700–1706 (YSPSSPS), and 1707–1713 (YSPSSPT). The tract at residues 1553 to 1713 (YSPTSPSYSP…SPSYSPSSPT (161 aa)) is C-terminal domain (CTD); 23 X 7 AA tandem repeats of Y-S-P-[ST]-S-P-[FST].

It belongs to the RNA polymerase beta' chain family. As to quaternary structure, component of the RNA polymerase II (Pol II) complex consisting of 12 subunits. The tandem heptapeptide repeats in the C-terminal domain (CTD) can be highly phosphorylated. The phosphorylation activates Pol II. Phosphorylation occurs mainly at residues 'Ser-2' and 'Ser-5' of the heptapeptide repeat. The phosphorylation state is believed to result from the balanced action of site-specific CTD kinases and phosphatase, and a 'CTD code' that specifies the position of Pol II within the transcription cycle has been proposed. Post-translationally, following transcription stress, the elongating form of RNA polymerase II (RNA pol IIo) is polyubiquitinated via 'Lys-63'-linkages on Lys-1266 at DNA damage sites without leading to degradation: ubiquitination promotes RNA pol IIo backtracking to allow access by the transcription-coupled nucleotide excision repair (TC-NER) machinery. Subsequent DEF1-dependent polyubiquitination by the elongin complex via 'Lys-48'-linkages may lead to proteasome-mediated degradation; presumably at stalled RNA pol II where TC-NER has failed, to halt global transcription and enable 'last resort' DNA repair pathways.

The protein localises to the nucleus. The catalysed reaction is RNA(n) + a ribonucleoside 5'-triphosphate = RNA(n+1) + diphosphate. In terms of biological role, DNA-dependent RNA polymerase catalyzes the transcription of DNA into RNA using the four ribonucleoside triphosphates as substrates. Largest and catalytic component of RNA polymerase II which synthesizes mRNA precursors and many functional non-coding RNAs. Forms the polymerase active center together with the second largest subunit. Pol II is the central component of the basal RNA polymerase II transcription machinery. It is composed of mobile elements that move relative to each other. RPB1 is part of the core element with the central large cleft, the clamp element that moves to open and close the cleft and the jaws that are thought to grab the incoming DNA template. At the start of transcription, a single-stranded DNA template strand of the promoter is positioned within the central active site cleft of Pol II. A bridging helix emanates from RPB1 and crosses the cleft near the catalytic site and is thought to promote translocation of Pol II by acting as a ratchet that moves the RNA-DNA hybrid through the active site by switching from straight to bent conformations at each step of nucleotide addition. During transcription elongation, Pol II moves on the template as the transcript elongates. Elongation is influenced by the phosphorylation status of the C-terminal domain (CTD) of Pol II largest subunit (RPB1), which serves as a platform for assembly of factors that regulate transcription initiation, elongation, termination and mRNA processing. The sequence is that of DNA-directed RNA polymerase II subunit rpb1 (polr2a) from Dictyostelium discoideum (Social amoeba).